Here is an 88-residue protein sequence, read N- to C-terminus: UPF0297 protein GK2555 (88 aa).

It belongs to the UPF0297 family.

The polypeptide is UPF0297 protein GK2555 (Geobacillus kaustophilus (strain HTA426)).